Reading from the N-terminus, the 499-residue chain is Bifunctional purine biosynthesis protein PurH (499 aa).

The 144-residue stretch at 1–144 folds into the MGS-like domain; that stretch reads MIKRALISVF…KNFQDVVVLT (144 aa).

Belongs to the PurH family.

The enzyme catalyses (6R)-10-formyltetrahydrofolate + 5-amino-1-(5-phospho-beta-D-ribosyl)imidazole-4-carboxamide = 5-formamido-1-(5-phospho-D-ribosyl)imidazole-4-carboxamide + (6S)-5,6,7,8-tetrahydrofolate. It carries out the reaction IMP + H2O = 5-formamido-1-(5-phospho-D-ribosyl)imidazole-4-carboxamide. The protein operates within purine metabolism; IMP biosynthesis via de novo pathway; 5-formamido-1-(5-phospho-D-ribosyl)imidazole-4-carboxamide from 5-amino-1-(5-phospho-D-ribosyl)imidazole-4-carboxamide (10-formyl THF route): step 1/1. Its pathway is purine metabolism; IMP biosynthesis via de novo pathway; IMP from 5-formamido-1-(5-phospho-D-ribosyl)imidazole-4-carboxamide: step 1/1. This is Bifunctional purine biosynthesis protein PurH from Clostridium acetobutylicum (strain ATCC 824 / DSM 792 / JCM 1419 / IAM 19013 / LMG 5710 / NBRC 13948 / NRRL B-527 / VKM B-1787 / 2291 / W).